Consider the following 65-residue polypeptide: Large ribosomal subunit protein bL35 (65 aa).

It belongs to the bacterial ribosomal protein bL35 family.

In Neisseria meningitidis serogroup A / serotype 4A (strain DSM 15465 / Z2491), this protein is Large ribosomal subunit protein bL35.